The sequence spans 471 residues: Regulator of microtubule dynamics protein 3 (471 aa).

Residues 1-9 are Mitochondrial intermembrane-facing; it reads MSSLGTLGG. Residues 10–32 form a helical membrane-spanning segment; that stretch reads ARAGLGLLLGTAAGLGFLCALYS. Over 33–471 the chain is Cytoplasmic; it reads QRWKRTQRRG…LEELEVILGE (439 aa). The disordered stretch occupies residues 39–70; the sequence is QRRGQSQSQSNSLDYTQTSEPGRQVRPLRAAP. Residues 41 to 50 show a composition bias toward low complexity; sequence RGQSQSQSNS. 4 positions are modified to phosphoserine: Ser-44, Ser-46, Ser-50, and Ser-57. Residues 90 to 123 adopt a coiled-coil conformation; it reads LDRLEFVLTSLVALRREVEELRSSLQGLAGQIVG. An FFAT motif is present at residues 156-162; that stretch reads VYFTAAS. Phosphothreonine is present on Thr-159. A disordered region spans residues 169–206; sequence AESEGGYTTANAESDYERDSERESDGDGEDEVSCETVK. Phosphoserine occurs at positions 182, 192, 212, and 233. Residues 183–193 show a composition bias toward basic and acidic residues; it reads DYERDSERESD.

Belongs to the RMDN family. As to quaternary structure, interacts with PTPN2. Interacts with microtubules. Interacts with VAPB. Interacts (via FFAT motif) with MOSPD2 (via MSP domain). Interacts (via phosphorylated FFAT motif) with MOSPD2, VAPA and VAPB. In terms of processing, phosphorylation at Thr-160 of the FFAT motif activates interaction with MOSPD2, VAPA and VAPB.

Its subcellular location is the mitochondrion outer membrane. It is found in the cytoplasm. It localises to the nucleus. The protein resides in the cytoskeleton. The protein localises to the spindle. Its subcellular location is the spindle pole. In terms of biological role, involved in cellular calcium homeostasis regulation. May participate in differentiation and apoptosis of keratinocytes. Overexpression induces apoptosis. The protein is Regulator of microtubule dynamics protein 3 of Bos taurus (Bovine).